Consider the following 570-residue polypeptide: Proline--tRNA ligase (570 aa).

Belongs to the class-II aminoacyl-tRNA synthetase family. ProS type 1 subfamily. As to quaternary structure, homodimer.

The protein resides in the cytoplasm. It carries out the reaction tRNA(Pro) + L-proline + ATP = L-prolyl-tRNA(Pro) + AMP + diphosphate. Its function is as follows. Catalyzes the attachment of proline to tRNA(Pro) in a two-step reaction: proline is first activated by ATP to form Pro-AMP and then transferred to the acceptor end of tRNA(Pro). As ProRS can inadvertently accommodate and process non-cognate amino acids such as alanine and cysteine, to avoid such errors it has two additional distinct editing activities against alanine. One activity is designated as 'pretransfer' editing and involves the tRNA(Pro)-independent hydrolysis of activated Ala-AMP. The other activity is designated 'posttransfer' editing and involves deacylation of mischarged Ala-tRNA(Pro). The misacylated Cys-tRNA(Pro) is not edited by ProRS. In Desulfotalea psychrophila (strain LSv54 / DSM 12343), this protein is Proline--tRNA ligase.